We begin with the raw amino-acid sequence, 322 residues long: MSDVRNVIIIGSGPAGYTAALYTARASLKPLVFEGAVTAGGALMNTTEVENFPGFQDGIMGPELMDNMRAQAERFGAELIPDDVVAVDLSGEIKTVTDTAGTVHRAKAVIVTTGSQHRKLGLPNEDALSGRGVSWCATCDGFFFKDQDIAVIGGGDTAMEEATFLSRFAKSVTIVHRRDTLRASKAMQERAFADPKISFVWDSEVAEVQGDQKLAGLKLRNVKTGELSDLPVTGLFIAIGHDPRTELFKGQLDLDPEGYLKVDAPSTRTNLTGVFGAGDVVDHTYRQAITAAGTGCSAAVDAEPFLAALSDEDKAEPEKTAV.

FAD-binding positions include 12–15 (SGPA), 34–42 (EGAVTAGGA), Asn-51, and Val-84. A disulfide bond links Cys-136 and Cys-139. His-176, Arg-182, Ile-239, and Tyr-259 together coordinate NADP(+). FAD is bound by residues Asp-279 and 286–289 (RQAI). Arg-286 contacts NADP(+).

It belongs to the class-II pyridine nucleotide-disulfide oxidoreductase family. In terms of assembly, homodimer. FAD serves as cofactor.

The protein localises to the cytoplasm. It carries out the reaction [thioredoxin]-dithiol + NADP(+) = [thioredoxin]-disulfide + NADPH + H(+). This Streptomyces coelicolor (strain ATCC BAA-471 / A3(2) / M145) protein is Thioredoxin reductase.